The following is a 519-amino-acid chain: Ribonuclease Y (519 aa).

The chain crosses the membrane as a helical span at residues Pro3 to Val23. Residues Thr209–Leu272 form the KH domain. Residues Val335–Ala428 enclose the HD domain.

Belongs to the RNase Y family.

It localises to the cell membrane. In terms of biological role, endoribonuclease that initiates mRNA decay. This chain is Ribonuclease Y, found in Bacillus licheniformis (strain ATCC 14580 / DSM 13 / JCM 2505 / CCUG 7422 / NBRC 12200 / NCIMB 9375 / NCTC 10341 / NRRL NRS-1264 / Gibson 46).